The chain runs to 334 residues: Stabilizer of axonemal microtubules 3 (334 aa).

Disordered stretches follow at residues 81-105 (AYVP…PTRT), 128-153 (YQSS…YFGP), and 233-260 (QVWS…RVPR). Positions 128-141 (YQSSETRAQYTGSP) are enriched in polar residues. The span at 240–251 (QRPPCPRSSRPP) shows a compositional bias: pro residues.

The chain is Stabilizer of axonemal microtubules 3 from Homo sapiens (Human).